Here is a 462-residue protein sequence, read N- to C-terminus: L-seryl-tRNA(Sec) selenium transferase (462 aa).

Lys294 bears the N6-(pyridoxal phosphate)lysine mark.

The protein belongs to the SelA family. Homodecamer; pentamer of dimers. Binds only one seryl-tRNA(Sec) per dimer. It depends on pyridoxal 5'-phosphate as a cofactor.

It is found in the cytoplasm. It carries out the reaction L-seryl-tRNA(Sec) + selenophosphate + H(+) = L-selenocysteinyl-tRNA(Sec) + phosphate. Its pathway is aminoacyl-tRNA biosynthesis; selenocysteinyl-tRNA(Sec) biosynthesis; selenocysteinyl-tRNA(Sec) from L-seryl-tRNA(Sec) (bacterial route): step 1/1. In terms of biological role, converts seryl-tRNA(Sec) to selenocysteinyl-tRNA(Sec) required for selenoprotein biosynthesis. This is L-seryl-tRNA(Sec) selenium transferase from Yersinia pestis bv. Antiqua (strain Antiqua).